The chain runs to 178 residues: Ribosome maturation factor RimM (178 aa).

Residues 101 to 178 (TDEYYWYQLV…VMRVEWDADF (78 aa)) enclose the PRC barrel domain.

It belongs to the RimM family. As to quaternary structure, binds ribosomal protein uS19.

It is found in the cytoplasm. Functionally, an accessory protein needed during the final step in the assembly of 30S ribosomal subunit, possibly for assembly of the head region. Essential for efficient processing of 16S rRNA. May be needed both before and after RbfA during the maturation of 16S rRNA. It has affinity for free ribosomal 30S subunits but not for 70S ribosomes. The polypeptide is Ribosome maturation factor RimM (Pseudomonas entomophila (strain L48)).